Reading from the N-terminus, the 1025-residue chain is Multidrug resistance protein MdtC (1025 aa).

The Cytoplasmic segment spans residues 1 to 6 (MKFFAL). A helical membrane pass occupies residues 7 to 29 (FIYRPVATILLSVAITLCGILGF). The Periplasmic portion of the chain corresponds to 30-335 (RMLPVAPLPQ…TIRASLEEVE (306 aa)). Residues 336–353 (QTLIISVALVILVVFLFL) form a helical membrane-spanning segment. At 354 to 359 (RSGRAT) the chain is on the cytoplasmic side. Residues 360–379 (IIPAVAVPVSLIGTFAAMYL) form a helical membrane-spanning segment. Topologically, residues 380–388 (CGFSLNNLS) are periplasmic. A helical membrane pass occupies residues 389–411 (LMALTIATGFVVDDAIVVLENIA). Topologically, residues 412–430 (RHLEAGMKPLQAALQGTRE) are cytoplasmic. The helical transmembrane segment at 431 to 453 (VGFTVLSMSLSLVAVFLPLLLMG) threads the bilayer. Over 454–467 (GLPGRLLREFAVTL) the chain is Periplasmic. Residues 468 to 490 (SVAIGISLLVSLTLTPMMCGWML) form a helical membrane-spanning segment. Residues 491–852 (KASKPREQKR…QVFQETMNSQ (362 aa)) are Cytoplasmic-facing. A helical membrane pass occupies residues 853–875 (VILIIAAIATVYIVLGILYESYV). Over 876–894 (HPLTILSTLPSAGVGALLA) the chain is Periplasmic. Residues 895-917 (LELFNAPFSLIALIGIMLLIGIV) form a helical membrane-spanning segment. At 918–947 (KKNAIMMVDFALEAQRHGNLTPQEAIFQAC) the chain is on the cytoplasmic side. A helical transmembrane segment spans residues 948–970 (LLRFRPIMMTTLAALFGALPLVL). The Periplasmic portion of the chain corresponds to 971-984 (SGGDGSELRQPLGI). The helical transmembrane segment at 985–1007 (TIVGGLVMSQLLTLYTTPVVYLF) threads the bilayer. The Cytoplasmic portion of the chain corresponds to 1008-1025 (FDRLRLRFSRKPKQAVTE).

Belongs to the resistance-nodulation-cell division (RND) (TC 2.A.6) family. MdtC subfamily. As to quaternary structure, part of a tripartite efflux system composed of MdtA, MdtB and MdtC. MdtC forms a heteromultimer with MdtB.

It localises to the cell inner membrane. Its function is as follows. The MdtABC tripartite complex confers resistance against novobiocin and deoxycholate. This Escherichia coli O6:H1 (strain CFT073 / ATCC 700928 / UPEC) protein is Multidrug resistance protein MdtC.